A 418-amino-acid chain; its full sequence is Gamma-glutamyl phosphate reductase (418 aa).

This sequence belongs to the gamma-glutamyl phosphate reductase family.

Its subcellular location is the cytoplasm. It carries out the reaction L-glutamate 5-semialdehyde + phosphate + NADP(+) = L-glutamyl 5-phosphate + NADPH + H(+). The protein operates within amino-acid biosynthesis; L-proline biosynthesis; L-glutamate 5-semialdehyde from L-glutamate: step 2/2. Its function is as follows. Catalyzes the NADPH-dependent reduction of L-glutamate 5-phosphate into L-glutamate 5-semialdehyde and phosphate. The product spontaneously undergoes cyclization to form 1-pyrroline-5-carboxylate. The polypeptide is Gamma-glutamyl phosphate reductase (Lacticaseibacillus casei (strain BL23) (Lactobacillus casei)).